Reading from the N-terminus, the 483-residue chain is Cobyric acid synthase (483 aa).

The GATase cobBQ-type domain occupies 252 to 439; it reads KLKVVVPVLT…LHGFLDSEAV (188 aa). The active-site Nucleophile is Cys333. Residue His431 is part of the active site.

It belongs to the CobB/CobQ family. CobQ subfamily.

It functions in the pathway cofactor biosynthesis; adenosylcobalamin biosynthesis. Its function is as follows. Catalyzes amidations at positions B, D, E, and G on adenosylcobyrinic A,C-diamide. NH(2) groups are provided by glutamine, and one molecule of ATP is hydrogenolyzed for each amidation. In Vibrio vulnificus (strain CMCP6), this protein is Cobyric acid synthase.